A 177-amino-acid polypeptide reads, in one-letter code: Large ribosomal subunit protein uL6 (177 aa).

It belongs to the universal ribosomal protein uL6 family. Part of the 50S ribosomal subunit.

In terms of biological role, this protein binds to the 23S rRNA, and is important in its secondary structure. It is located near the subunit interface in the base of the L7/L12 stalk, and near the tRNA binding site of the peptidyltransferase center. This Rickettsia canadensis (strain McKiel) protein is Large ribosomal subunit protein uL6.